We begin with the raw amino-acid sequence, 220 residues long: Uracil phosphoribosyltransferase 2 (220 aa).

Position 77-80 (77-80 (ARDI)) interacts with GTP. 5-phospho-alpha-D-ribose 1-diphosphate-binding residues include arginine 87 and arginine 113. A GTP-binding site is contributed by arginine 134. 5-phospho-alpha-D-ribose 1-diphosphate is bound by residues aspartate 140 and 140–148 (DPLLATGNS). D-ribose 5-phosphate is bound at residue tyrosine 204. Residues valine 205 and 210 to 212 (GDF) each bind uracil. A 5-phospho-alpha-D-ribose 1-diphosphate-binding site is contributed by aspartate 211.

The protein belongs to the UPRTase family. Mg(2+) is required as a cofactor.

It carries out the reaction UMP + diphosphate = 5-phospho-alpha-D-ribose 1-diphosphate + uracil. It functions in the pathway pyrimidine metabolism; UMP biosynthesis via salvage pathway; UMP from uracil: step 1/1. Allosterically activated by GTP. Its function is as follows. Catalyzes the conversion of uracil and 5-phospho-alpha-D-ribose 1-diphosphate (PRPP) to UMP and diphosphate. The sequence is that of Uracil phosphoribosyltransferase 2 from Schizosaccharomyces pombe (strain 972 / ATCC 24843) (Fission yeast).